The following is a 599-amino-acid chain: Aspartate--tRNA(Asp/Asn) ligase (599 aa).

Glutamate 172 provides a ligand contact to L-aspartate. The aspartate stretch occupies residues 196–199 (QLFK). Residue arginine 218 participates in L-aspartate binding. Residues 218-220 (RDE) and glutamine 227 contribute to the ATP site. Residue histidine 455 coordinates L-aspartate. Glutamate 489 is a binding site for ATP. Arginine 496 serves as a coordination point for L-aspartate. ATP is bound at residue 541 to 544 (GLDR).

It belongs to the class-II aminoacyl-tRNA synthetase family. Type 1 subfamily. As to quaternary structure, homodimer.

Its subcellular location is the cytoplasm. It carries out the reaction tRNA(Asx) + L-aspartate + ATP = L-aspartyl-tRNA(Asx) + AMP + diphosphate. In terms of biological role, aspartyl-tRNA synthetase with relaxed tRNA specificity since it is able to aspartylate not only its cognate tRNA(Asp) but also tRNA(Asn). Reaction proceeds in two steps: L-aspartate is first activated by ATP to form Asp-AMP and then transferred to the acceptor end of tRNA(Asp/Asn). This chain is Aspartate--tRNA(Asp/Asn) ligase, found in Herminiimonas arsenicoxydans.